The primary structure comprises 263 residues: MISYDDQVLVSYSNQRWEEAEAFSSQFGLRLVALEALPAKSDRAVYLLNFSDTRVELVNWREQAPGPVFVDFVEGALAYRREHGGGRGEMVAKSVGLKGEVKCLNVLDATAGLGRDAYVLAALGCHVVMYERNPLVHALLADGLRRALECADAASVVSRMTLHLGEAFNTFPDGIDVVYLDPMFPERRKSSAVKKEMQAFKDIVGADPDADELLAAALRQEVKRIVVKRPKGAPCLLGREPSFTVTGKSGRFDVYALRKLTGG.

S-adenosyl-L-methionine contacts are provided by residues 115-116, 131-132, and Asp-181; these read RD and ER.

The protein belongs to the methyltransferase superfamily. RsmJ family.

The protein resides in the cytoplasm. The catalysed reaction is guanosine(1516) in 16S rRNA + S-adenosyl-L-methionine = N(2)-methylguanosine(1516) in 16S rRNA + S-adenosyl-L-homocysteine + H(+). Specifically methylates the guanosine in position 1516 of 16S rRNA. This Hahella chejuensis (strain KCTC 2396) protein is Ribosomal RNA small subunit methyltransferase J.